Here is a 205-residue protein sequence, read N- to C-terminus: Golgi apparatus membrane protein TVP23 homolog B (205 aa).

Methionine 1 is modified (N-acetylmethionine). The disordered stretch occupies residues 1–21 (MLQQDSNDDTEDVSLFDAEEE). Helical transmembrane passes span 34–53 (PVASFFHLFFRVSAIIVYLL), 54–72 (CGLLSSSFITCMVTIILLL), 126–146 (IFWLGLIACPVLWVIFAFSAL), and 152–172 (KWLAVVIMGVVLQGANLYGYI).

Belongs to the TVP23 family.

The protein resides in the membrane. The chain is Golgi apparatus membrane protein TVP23 homolog B (TVP23B) from Homo sapiens (Human).